A 391-amino-acid polypeptide reads, in one-letter code: Alanine racemase (391 aa).

Residue lysine 46 is the Proton acceptor; specific for D-alanine of the active site. Lysine 46 is subject to N6-(pyridoxal phosphate)lysine. Arginine 148 lines the substrate pocket. Tyrosine 283 (proton acceptor; specific for L-alanine) is an active-site residue. A substrate-binding site is contributed by methionine 331.

This sequence belongs to the alanine racemase family. Pyridoxal 5'-phosphate is required as a cofactor.

It catalyses the reaction L-alanine = D-alanine. It functions in the pathway amino-acid biosynthesis; D-alanine biosynthesis; D-alanine from L-alanine: step 1/1. Functionally, catalyzes the interconversion of L-alanine and D-alanine. May also act on other amino acids. This chain is Alanine racemase (alr), found in Streptomyces coelicolor (strain ATCC BAA-471 / A3(2) / M145).